Reading from the N-terminus, the 196-residue chain is Imidazoleglycerol-phosphate dehydratase (196 aa).

This sequence belongs to the imidazoleglycerol-phosphate dehydratase family.

It is found in the cytoplasm. The enzyme catalyses D-erythro-1-(imidazol-4-yl)glycerol 3-phosphate = 3-(imidazol-4-yl)-2-oxopropyl phosphate + H2O. Its pathway is amino-acid biosynthesis; L-histidine biosynthesis; L-histidine from 5-phospho-alpha-D-ribose 1-diphosphate: step 6/9. The sequence is that of Imidazoleglycerol-phosphate dehydratase from Ralstonia nicotianae (strain ATCC BAA-1114 / GMI1000) (Ralstonia solanacearum).